Reading from the N-terminus, the 961-residue chain is Retinoblastoma-related protein 1 (961 aa).

The domain A stretch occupies residues 404 to 606 (TPVSTAMTTA…EKGSSMYNSL (203 aa)). The segment at 404–819 (TPVSTAMTTA…NEMFIPSVKP (416 aa)) is pocket. The interval 607–728 (AVAKPSLAAE…PGGGGETCAE (122 aa)) is spacer. A domain B region spans residues 729-819 (TAINVFFGKI…NEMFIPSVKP (91 aa)). The disordered stretch occupies residues 829 to 856 (NAEKNNHNDGQGPASPKPSPFPKLPDMS).

Belongs to the retinoblastoma protein (RB) family.

Its subcellular location is the nucleus. In terms of biological role, regulator of biological processes that recruits a histone deacetylase to control gene transcription. May play a role in the entry into mitosis, negatively regulating the cell proliferation. Formation of stable complexes with geminiviridae replication-associated proteins may create a cellular environment which favors viral DNA replication. This Nicotiana tabacum (Common tobacco) protein is Retinoblastoma-related protein 1 (RB1).